Consider the following 1265-residue polypeptide: Topoisomerase 1-associated factor 1 (1265 aa).

Polar residues predominate over residues 650-659 (DVNGNKNGQD). Disordered regions lie at residues 650 to 670 (DVNGNKNGQDTTRDADEDAIS), 1019 to 1052 (GKQIPRGTAKKRSAIKPKSRKSQPTGIGGIDDDT), and 1167 to 1226 (HLSL…DPPS). Positions 1026-1039 (TAKKRSAIKPKSRK) are enriched in basic residues. Composition is skewed to low complexity over residues 1171-1188 (SPNNENNSAHSSENLSSD) and 1201-1211 (SDSEYNSSNSS).

This sequence belongs to the timeless family. As to quaternary structure, component of the fork protection complex (FPC) consisting of TOF1 and CSM3.

The protein localises to the nucleus. Forms a fork protection complex (FPC) with CSM3 and which is required for chromosome segregation during meiosis and DNA damage repair. FPC coordinates leading and lagging strand synthesis and moves with the replication fork. FPC stabilizes replication forks in a configuration that is recognized by replication checkpoint sensors. The polypeptide is Topoisomerase 1-associated factor 1 (TOF1) (Eremothecium gossypii (strain ATCC 10895 / CBS 109.51 / FGSC 9923 / NRRL Y-1056) (Yeast)).